Here is a 386-residue protein sequence, read N- to C-terminus: ATP phosphoribosyltransferase regulatory subunit (386 aa).

The protein belongs to the class-II aminoacyl-tRNA synthetase family. HisZ subfamily. As to quaternary structure, heteromultimer composed of HisG and HisZ subunits.

Its subcellular location is the cytoplasm. It participates in amino-acid biosynthesis; L-histidine biosynthesis; L-histidine from 5-phospho-alpha-D-ribose 1-diphosphate: step 1/9. Its function is as follows. Required for the first step of histidine biosynthesis. May allow the feedback regulation of ATP phosphoribosyltransferase activity by histidine. The protein is ATP phosphoribosyltransferase regulatory subunit of Variovorax paradoxus (strain S110).